Here is a 319-residue protein sequence, read N- to C-terminus: Methionyl-tRNA formyltransferase (319 aa).

116–119 (SLLP) contributes to the (6S)-5,6,7,8-tetrahydrofolate binding site.

The protein belongs to the Fmt family.

It carries out the reaction L-methionyl-tRNA(fMet) + (6R)-10-formyltetrahydrofolate = N-formyl-L-methionyl-tRNA(fMet) + (6S)-5,6,7,8-tetrahydrofolate + H(+). Functionally, attaches a formyl group to the free amino group of methionyl-tRNA(fMet). The formyl group appears to play a dual role in the initiator identity of N-formylmethionyl-tRNA by promoting its recognition by IF2 and preventing the misappropriation of this tRNA by the elongation apparatus. This chain is Methionyl-tRNA formyltransferase, found in Chlorobium phaeovibrioides (strain DSM 265 / 1930) (Prosthecochloris vibrioformis (strain DSM 265)).